A 583-amino-acid polypeptide reads, in one-letter code: Aspartate--tRNA ligase (583 aa).

Residue E174 coordinates L-aspartate. The tract at residues 198 to 201 (QITK) is aspartate. Residue R220 coordinates L-aspartate. ATP contacts are provided by residues 220–222 (RDE) and Q229. H443 contributes to the L-aspartate binding site. E477 provides a ligand contact to ATP. Residue R484 participates in L-aspartate binding. 529 to 532 (GLDR) serves as a coordination point for ATP.

This sequence belongs to the class-II aminoacyl-tRNA synthetase family. Type 1 subfamily. Homodimer.

It is found in the cytoplasm. The catalysed reaction is tRNA(Asp) + L-aspartate + ATP = L-aspartyl-tRNA(Asp) + AMP + diphosphate. Its function is as follows. Catalyzes the attachment of L-aspartate to tRNA(Asp) in a two-step reaction: L-aspartate is first activated by ATP to form Asp-AMP and then transferred to the acceptor end of tRNA(Asp). The polypeptide is Aspartate--tRNA ligase (Streptococcus thermophilus (strain ATCC BAA-491 / LMD-9)).